The following is a 1349-amino-acid chain: Aldehyde oxidase 2 (1349 aa).

The 2Fe-2S ferredoxin-type domain maps to Asp8–Val96. [2Fe-2S] cluster-binding residues include Cys47, Cys52, Cys55, and Cys78. Gln117 contributes to the Mo-molybdopterin binding site. [2Fe-2S] cluster contacts are provided by Cys118, Cys121, Cys153, and Cys155. Position 155 (Cys155) interacts with Mo-molybdopterin. In terms of domain architecture, FAD-binding PCMH-type spans Phe240–Lys425. Residues Leu268–Leu275, Ala349, Ser358, His362, Asp371, and Leu415 contribute to the FAD site. Mo-molybdopterin contacts are provided by residues Gly816 to Phe817, Ala1098 to Gly1101, Gln1213, and Leu1278. The active-site Proton acceptor; for azaheterocycle hydroxylase activity is Glu1280.

It belongs to the xanthine dehydrogenase family. Homodimer. Requires [2Fe-2S] cluster as cofactor. FAD is required as a cofactor. It depends on Mo-molybdopterin as a cofactor. As to expression, only detected at very few levels in nasal mucosa.

The protein localises to the cytoplasm. It carries out the reaction an aldehyde + O2 + H2O = a carboxylate + H2O2 + H(+). Oxidase with broad substrate specificity, oxidizing aromatic azaheterocycles, such as phthalazine, as well as aldehydes, such as benzaldehyde and retinal. The sequence is that of Aldehyde oxidase 2 (AOX2) from Macaca fascicularis (Crab-eating macaque).